A 574-amino-acid polypeptide reads, in one-letter code: Streptolysin O (574 aa).

The first 36 residues, 1 to 36 (MKDMSNKKIFKKYSRVAGLLTAALIVGNLVTANADS), serve as a signal peptide directing secretion. The segment covering 37-52 (NKQNTANTETTTTNEQ) has biased composition (low complexity). 2 disordered regions span residues 37–64 (NKQN…TTEK) and 84–111 (KEMP…HTEE). A compositionally biased stretch (basic and acidic residues) spans 53-64 (PKPESSELTTEK). 4 beta stranded membrane-spanning segments follow: residues 263–276 (KSQI…NSKI), 283–292 (IDFKSISKGE), 361–370 (SNDVEAAFSA), and 378–390 (KTNG…LENS). The Conserved undecapeptide motif lies at 532–542 (ECTGLAWEWWR). The Cholesterol binding signature appears at 564–565 (TL).

Belongs to the cholesterol-dependent cytolysin family. As to quaternary structure, homooligomeric pore complex of 35 to 50 subunits; when inserted in the host membrane.

Its subcellular location is the secreted. The protein localises to the host cell membrane. A cholesterol-dependent toxin that causes cytolysis by forming pores in cholesterol containing host membranes. After binding to target membranes, the protein undergoes a major conformation change, leading to its insertion in the host membrane and formation of an oligomeric pore complex. Cholesterol is required for binding to host membranes, membrane insertion and pore formation; cholesterol binding is mediated by a Thr-Leu pair in the C-terminus. Can be reversibly inactivated by oxidation. This Streptococcus canis protein is Streptolysin O (slo).